Consider the following 633-residue polypeptide: Probable potassium transport system protein Kup (633 aa).

Transmembrane regions (helical) follow at residues 21-41 (LAVG…LYAF), 61-81 (LVSL…VLFL), 107-127 (TAVL…DAMI), 145-165 (PTLS…LFAI), 176-196 (FFGP…IMHI), 219-239 (GFLG…AEAL), 255-275 (WFVL…ALVL), 293-313 (ALLP…QAVI), 345-365 (IFLP…VLSF), 371-391 (LATA…IMAF), 402-422 (LPMA…FLGA), and 427-447 (IHDG…IMWT).

It belongs to the HAK/KUP transporter (TC 2.A.72) family.

It is found in the cell inner membrane. It catalyses the reaction K(+)(in) + H(+)(in) = K(+)(out) + H(+)(out). Its function is as follows. Transport of potassium into the cell. Likely operates as a K(+):H(+) symporter. The polypeptide is Probable potassium transport system protein Kup (Rhizobium rhizogenes (strain K84 / ATCC BAA-868) (Agrobacterium radiobacter)).